The primary structure comprises 329 residues: Pantothenate kinase (329 aa).

Residues 1-21 (MISPVPSIPRSAHRQRPEATP) form a disordered region. 107 to 114 (GSVAVGKS) provides a ligand contact to ATP.

The protein belongs to the prokaryotic pantothenate kinase family.

It localises to the cytoplasm. The enzyme catalyses (R)-pantothenate + ATP = (R)-4'-phosphopantothenate + ADP + H(+). The protein operates within cofactor biosynthesis; coenzyme A biosynthesis; CoA from (R)-pantothenate: step 1/5. This is Pantothenate kinase (coaA) from Streptomyces coelicolor (strain ATCC BAA-471 / A3(2) / M145).